The following is a 496-amino-acid chain: D-2-hydroxyglutarate--pyruvate transhydrogenase DLD3 (496 aa).

Lys17 is covalently cross-linked (Glycyl lysine isopeptide (Lys-Gly) (interchain with G-Cter in ubiquitin)). Positions 64–243 (YRGQSNLILL…TGVSIVAAAK (180 aa)) constitute an FAD-binding PCMH-type domain.

Belongs to the FAD-binding oxidoreductase/transferase type 4 family. The cofactor is FAD.

The protein localises to the cytoplasm. It catalyses the reaction (R)-lactate + 2 Fe(III)-[cytochrome c] = 2 Fe(II)-[cytochrome c] + pyruvate + 2 H(+). The catalysed reaction is (R)-2-hydroxyglutarate + pyruvate = (R)-lactate + 2-oxoglutarate. In terms of biological role, catalyzes the reversible oxidation of (R)-2-hydroxyglutarate to 2-oxoglutarate coupled to reduction of pyruvate to (R)-lactate. Can also use oxaloacetate as electron acceptor instead of pyruvate producing (R)-malate. This Saccharomyces cerevisiae (strain ATCC 204508 / S288c) (Baker's yeast) protein is D-2-hydroxyglutarate--pyruvate transhydrogenase DLD3 (DLD3).